The chain runs to 352 residues: MDFHIRNSNLQEIEVRRKPHSRSPKIQQTEAEATAMNFRIPATASSIPTKYQTVFIPTSEKNGFNSRSLRFSYSLTQNENPGPGAYNVARTSADINSVSLSKKGTGGFPSKAPRTLQCKIARTPAPNAYNVYEEFFSKKDFSKGNSSMFQQPIAMEVEDTNHLTPAPNQYSASLTYCHPNNNVSAHAAFVSKTKRELLKPNPVKGPSPCHYKINDSLVKESTKVPVSCFKSKTSRNSLNVISDNPGPASYDPYKSSESEKKIIFLRKHYLCFSAPAMPIPKAPPVPGPGHYDIVDYEGLPKQYMSGAAFVSNTSRWAGDVSGKSLPGPGAYHPEIPGRYSFLYNSNRKWVPA.

STPGR repeat units lie at residues 80 to 90, 124 to 139, 165 to 171, 205 to 235, 244 to 263, 286 to 295, and 325 to 335; these read NPGPGAYNVAR, PAPN…FSKK, PAPNQYS, GPSP…KTSR, NPGP…KKII, PGPGHYDIVD, and LPGPGAYHPEI.

The protein belongs to the STPG1 family.

The protein resides in the cytoplasm. It localises to the nucleus. Its function is as follows. May positively contribute to the induction of apoptosis triggered by O(6)-methylguanine. This Xenopus laevis (African clawed frog) protein is O(6)-methylguanine-induced apoptosis 2 (stpg1).